The following is a 677-amino-acid chain: Methionine--tRNA ligase (677 aa).

The 'HIGH' region signature appears at 15 to 25 (PYANGSIHLGH). Residues Cys-146, Cys-149, Cys-159, and Cys-162 each contribute to the Zn(2+) site. The 'KMSKS' region signature appears at 333–337 (KMSKS). Lys-336 is an ATP binding site. A tRNA-binding domain is found at 575-677 (DFAKIDLRVA…SGAKPGQQVK (103 aa)).

The protein belongs to the class-I aminoacyl-tRNA synthetase family. MetG type 1 subfamily. In terms of assembly, homodimer. The cofactor is Zn(2+).

It localises to the cytoplasm. It catalyses the reaction tRNA(Met) + L-methionine + ATP = L-methionyl-tRNA(Met) + AMP + diphosphate. Its function is as follows. Is required not only for elongation of protein synthesis but also for the initiation of all mRNA translation through initiator tRNA(fMet) aminoacylation. The chain is Methionine--tRNA ligase from Cronobacter sakazakii (strain ATCC BAA-894) (Enterobacter sakazakii).